The following is a 382-amino-acid chain: Heme A synthase (382 aa).

Transmembrane regions (helical) follow at residues 37–57 (IRVW…VGGL), 126–146 (VIGV…QVPA), 152–172 (LLFL…MVAS), 188–208 (LATH…YIME), 231–251 (STGL…VAGI), 288–308 (LVQF…VVVW), and 332–352 (LQIV…IAIF). Residue histidine 293 coordinates heme. Histidine 353 contributes to the heme binding site. A helical transmembrane segment spans residues 356 to 376 (LAVIVWVLILRARFLSGYPIA).

It belongs to the COX15/CtaA family. Type 2 subfamily. Interacts with CtaB. Requires heme b as cofactor.

The protein resides in the cell membrane. It catalyses the reaction Fe(II)-heme o + 2 A + H2O = Fe(II)-heme a + 2 AH2. It functions in the pathway porphyrin-containing compound metabolism; heme A biosynthesis; heme A from heme O: step 1/1. Its function is as follows. Catalyzes the conversion of heme O to heme A by two successive hydroxylations of the methyl group at C8. The first hydroxylation forms heme I, the second hydroxylation results in an unstable dihydroxymethyl group, which spontaneously dehydrates, resulting in the formyl group of heme A. The polypeptide is Heme A synthase (Roseobacter denitrificans (strain ATCC 33942 / OCh 114) (Erythrobacter sp. (strain OCh 114))).